Consider the following 392-residue polypeptide: Formate-dependent phosphoribosylglycinamide formyltransferase (392 aa).

N(1)-(5-phospho-beta-D-ribosyl)glycinamide is bound by residues 22–23 (EL) and glutamate 82. ATP contacts are provided by residues arginine 114, lysine 155, 160-165 (SSGKGQ), 195-198 (EGVV), and glutamate 203. An ATP-grasp domain is found at 119 to 308 (RLAAEELQLP…EFALHVRAFL (190 aa)). Positions 267 and 279 each coordinate Mg(2+). N(1)-(5-phospho-beta-D-ribosyl)glycinamide-binding positions include aspartate 286, lysine 355, and 362–363 (RR).

The protein belongs to the PurK/PurT family. In terms of assembly, homodimer.

The catalysed reaction is N(1)-(5-phospho-beta-D-ribosyl)glycinamide + formate + ATP = N(2)-formyl-N(1)-(5-phospho-beta-D-ribosyl)glycinamide + ADP + phosphate + H(+). It functions in the pathway purine metabolism; IMP biosynthesis via de novo pathway; N(2)-formyl-N(1)-(5-phospho-D-ribosyl)glycinamide from N(1)-(5-phospho-D-ribosyl)glycinamide (formate route): step 1/1. Functionally, involved in the de novo purine biosynthesis. Catalyzes the transfer of formate to 5-phospho-ribosyl-glycinamide (GAR), producing 5-phospho-ribosyl-N-formylglycinamide (FGAR). Formate is provided by PurU via hydrolysis of 10-formyl-tetrahydrofolate. The polypeptide is Formate-dependent phosphoribosylglycinamide formyltransferase (Escherichia coli O157:H7).